The sequence spans 468 residues: Glutamate--tRNA ligase (468 aa).

The short motif at 14-24 (PSPTGFIHLGN) is the 'HIGH' region element. A 'KMSKS' region motif is present at residues 246 to 250 (KMSKR). K249 contributes to the ATP binding site.

This sequence belongs to the class-I aminoacyl-tRNA synthetase family. Glutamate--tRNA ligase type 1 subfamily. As to quaternary structure, monomer.

The protein resides in the cytoplasm. It catalyses the reaction tRNA(Glu) + L-glutamate + ATP = L-glutamyl-tRNA(Glu) + AMP + diphosphate. Catalyzes the attachment of glutamate to tRNA(Glu) in a two-step reaction: glutamate is first activated by ATP to form Glu-AMP and then transferred to the acceptor end of tRNA(Glu). The protein is Glutamate--tRNA ligase of Leptothrix cholodnii (strain ATCC 51168 / LMG 8142 / SP-6) (Leptothrix discophora (strain SP-6)).